Reading from the N-terminus, the 83-residue chain is NADH dehydrogenase [ubiquinone] iron-sulfur protein 5-B (83 aa).

The CHCH domain occupies 11-52; it reads KGRCYDFWMDFSECMSHCREPKDCTLLREDYLECLHHSKEFQ. 2 consecutive short sequence motifs (cx9C motif) follow at residues 14-24 and 34-44; these read CYDFWMDFSEC and CTLLREDYLEC. 2 disulfide bridges follow: cysteine 14-cysteine 44 and cysteine 24-cysteine 34. Residues 62 to 83 are disordered; sequence QRKLRAASRKGEETGDGTHTHH.

It belongs to the complex I NDUFS5 subunit family. In terms of assembly, complex I is composed of at least 49 different subunits. This is a component of the iron-sulfur (IP) fragment of the enzyme.

Its subcellular location is the mitochondrion. It is found in the mitochondrion inner membrane. The protein localises to the mitochondrion intermembrane space. Accessory subunit of the mitochondrial membrane respiratory chain NADH dehydrogenase (Complex I), that is believed not to be involved in catalysis. Complex I functions in the transfer of electrons from NADH to the respiratory chain. The immediate electron acceptor for the enzyme is believed to be ubiquinone. This Arabidopsis thaliana (Mouse-ear cress) protein is NADH dehydrogenase [ubiquinone] iron-sulfur protein 5-B.